A 339-amino-acid polypeptide reads, in one-letter code: Dihydroorotate dehydrogenase (quinone) (339 aa).

FMN-binding positions include 62-66 (AGLDK) and Thr-86. Residue Lys-66 participates in substrate binding. A substrate-binding site is contributed by 111–115 (NRMGF). FMN contacts are provided by Asn-139 and Asn-172. Residue Asn-172 participates in substrate binding. Residue Ser-175 is the Nucleophile of the active site. Asn-177 is a substrate binding site. Residues Lys-217 and Thr-245 each contribute to the FMN site. 246–247 (NT) contacts substrate. FMN-binding positions include Gly-268, Gly-297, and 318–319 (YS).

Belongs to the dihydroorotate dehydrogenase family. Type 2 subfamily. Monomer. The cofactor is FMN.

The protein localises to the cell membrane. It carries out the reaction (S)-dihydroorotate + a quinone = orotate + a quinol. Its pathway is pyrimidine metabolism; UMP biosynthesis via de novo pathway; orotate from (S)-dihydroorotate (quinone route): step 1/1. Catalyzes the conversion of dihydroorotate to orotate with quinone as electron acceptor. This Shewanella frigidimarina (strain NCIMB 400) protein is Dihydroorotate dehydrogenase (quinone).